A 147-amino-acid polypeptide reads, in one-letter code: Cyanate hydratase (147 aa).

Active-site residues include R88, E91, and S114.

Belongs to the cyanase family.

The catalysed reaction is cyanate + hydrogencarbonate + 3 H(+) = NH4(+) + 2 CO2. Catalyzes the reaction of cyanate with bicarbonate to produce ammonia and carbon dioxide. The protein is Cyanate hydratase of Dechloromonas aromatica (strain RCB).